A 265-amino-acid chain; its full sequence is uncharacterized protein (265 aa).

Positions 1-20 (MSRAMALFFVLCWIQDEIVL) are cleaved as a signal peptide. The chain crosses the membrane as a helical span at residues 192-212 (IIAAVSGVAILMAIVLLLLGL).

The protein resides in the membrane. This is an uncharacterized protein from Homo sapiens (Human).